A 501-amino-acid polypeptide reads, in one-letter code: Prostacyclin synthase (501 aa).

Residues 1–21 (MSWAALLGLLAVLLLLLLLLS) traverse the membrane as a helical segment. Substrate-binding positions include arginine 107, leucine 113, asparagine 288, 359 to 360 (TR), and arginine 383. Cysteine 442 serves as a coordination point for heme.

Belongs to the cytochrome P450 family. Heme serves as cofactor.

It is found in the endoplasmic reticulum membrane. The enzyme catalyses prostaglandin H2 = prostaglandin I2. It carries out the reaction a hydroperoxyeicosatetraenoate = an oxoeicosatetraenoate + H2O. The catalysed reaction is (15S)-hydroperoxy-(5Z,8Z,11Z,13E)-eicosatetraenoate = 15-oxo-(5Z,8Z,11Z,13E)-eicosatetraenoate + H2O. It catalyses the reaction (15S)-hydroperoxy-(5Z,8Z,11Z,13E)-eicosatetraenoate + AH2 = (15S)-hydroxy-(5Z,8Z,11Z,13E)-eicosatetraenoate + A + H2O. Its function is as follows. Catalyzes the biosynthesis and metabolism of eicosanoids. Catalyzes the isomerization of prostaglandin H2 to prostacyclin (= prostaglandin I2), a potent mediator of vasodilation and inhibitor of platelet aggregation. Additionally, displays dehydratase activity, toward hydroperoxyeicosatetraenoates (HPETEs), especially toward (15S)-hydroperoxy-(5Z,8Z,11Z,13E)-eicosatetraenoate (15(S)-HPETE). In Rattus norvegicus (Rat), this protein is Prostacyclin synthase (Ptgis).